The primary structure comprises 359 residues: tRNA pseudouridine synthase B (359 aa).

The active-site Nucleophile is D63.

Belongs to the pseudouridine synthase TruB family. Type 1 subfamily.

The enzyme catalyses uridine(55) in tRNA = pseudouridine(55) in tRNA. Functionally, responsible for synthesis of pseudouridine from uracil-55 in the psi GC loop of transfer RNAs. This Psychrobacter cryohalolentis (strain ATCC BAA-1226 / DSM 17306 / VKM B-2378 / K5) protein is tRNA pseudouridine synthase B.